The chain runs to 149 residues: Oligosaccharyltransferase complex subunit ostc-A (149 aa).

The Cytoplasmic portion of the chain corresponds to 1–32 (MESLYRVPFTVLECPNLKLKKPSWLHMPSAMT). A helical transmembrane segment spans residues 33 to 53 (VYAMVVVSYFLITGGIIYDVI). Topologically, residues 54 to 83 (VEPPSVGSMTDEHGHQRPVAFLAYRVNGQY) are extracellular. A helical transmembrane segment spans residues 84–104 (IMEGLASSFLFTMGGLGFIIL). Residues 105–117 (DRSNTPNIPKLNR) lie on the Cytoplasmic side of the membrane. A helical transmembrane segment spans residues 118 to 138 (FLLLFIGFVCVLLSFFMARVF). Topologically, residues 139–149 (MRMKLPGYLMG) are extracellular.

Belongs to the OSTC family. As to quaternary structure, specific component of the STT3A-containing form of the oligosaccharyltransferase (OST) complex.

The protein resides in the membrane. It participates in protein modification; protein glycosylation. Specific component of the STT3A-containing form of the oligosaccharyl transferase (OST) complex that catalyzes the initial transfer of a defined glycan (Glc(3)Man(9)GlcNAc(2) in eukaryotes) from the lipid carrier dolichol-pyrophosphate to an asparagine residue within an Asn-X-Ser/Thr consensus motif in nascent polypeptide chains, the first step in protein N-glycosylation. N-glycosylation occurs cotranslationally and the complex associates with the Sec61 complex at the channel-forming translocon complex that mediates protein translocation across the endoplasmic reticulum (ER). All subunits are required for a maximal enzyme activity. This is Oligosaccharyltransferase complex subunit ostc-A from Xenopus laevis (African clawed frog).